The primary structure comprises 114 residues: Beta-microseminoprotein J1 (114 aa).

Positions methionine 1–alanine 20 are cleaved as a signal peptide. Cystine bridges form between cysteine 22–cysteine 70, cysteine 38–cysteine 62, cysteine 57–cysteine 93, cysteine 60–cysteine 69, and cysteine 84–cysteine 107.

It belongs to the beta-microseminoprotein family.

The protein localises to the secreted. This Saguinus oedipus (Cotton-top tamarin) protein is Beta-microseminoprotein J1 (MSPJ).